Reading from the N-terminus, the 925-residue chain is Serine/threonine-protein phosphatase 1 regulatory subunit 10 (925 aa).

Residues 1-348 (MGSGPIDPKE…EPAPPSEAMD (348 aa)) are interaction with TOX4. In terms of domain architecture, TFIIS N-terminal spans 73–147 (KLLNNWLTYS…SDWMAVIRSQ (75 aa)). The disordered stretch occupies residues 147–211 (QSSTQPAEKD…APSHAKFRST (65 aa)). Basic and acidic residues-rich tracts occupy residues 153-166 (AEKD…EGKS) and 174-196 (PLTE…EKPK). Residues K179 and K262 each participate in a glycyl lysine isopeptide (Lys-Gly) (interchain with G-Cter in SUMO2) cross-link. Disordered regions lie at residues 304–398 (KIKK…KRKT), 536–555 (TLEP…SKLP), and 587–890 (SIMG…HGGD). S313 is modified (phosphoserine). Over residues 325–336 (KTSTEPSTAKPS) the composition is skewed to low complexity. A necessary for interaction with PPP1CA region spans residues 357–433 (PPVEVPELMD…NKIKDFGEAA (77 aa)). S382 is modified (phosphoserine). A necessary for interaction with PPP1CC region spans residues 393–408 (GRKRKTVTWPEEGKLR). The short motif at 394–423 (RKRKTVTWPEEGKLREYFYFELDETERVNV) is the PP1-binding motif element. A Phosphothreonine; by PKA modification is found at T398. Residues 418–619 (TERVNVNKIK…IKQMLVPHGL (202 aa)) form an interaction with WDR82 region. Over residues 540–551 (GGAGGSPDGAGG) the composition is skewed to gly residues. S545 and S591 each carry phosphoserine. Over residues 596 to 611 (PSEELLKQPDYSDKIK) the composition is skewed to basic and acidic residues. Residues 644 to 655 (PPGPGGPMPGPH) are compositionally biased toward pro residues. Over residues 656–665 (GGPGGPGGPV) the composition is skewed to gly residues. At R668 the chain carries Omega-N-methylarginine. The span at 679–693 (GDPFWDGPGDPMRGG) shows a compositional bias: low complexity. Residues R696 and R741 each carry the omega-N-methylarginine modification. 2 stretches are compositionally biased toward gly residues: residues 728–766 (ARGG…GMSS) and 775–829 (GPGG…AGGG). Composition is skewed to basic and acidic residues over residues 846–871 (PHDV…HDGP) and 879–890 (RGHDGGHNHGGD). The C3H1-type zinc finger occupies 891 to 919 (MSKRPVCRHFMMKGNCRYENNCAFYHPGV).

Component of the PNUTS-PP1 complex (also named PTW/PP1 complex), composed of PPP1R10/PNUTS, TOX4, WDR82, and PPP1CA (or PPP1CB or PPP1CC). In terms of processing, phosphorylated on Ser-398 by PKA within the region necessary for interaction with PPP1CA.

Its subcellular location is the nucleus. The protein resides in the chromosome. Its function is as follows. Substrate-recognition component of the PNUTS-PP1 protein phosphatase complex, a protein phosphatase 1 (PP1) complex that promotes RNA polymerase II transcription pause-release, allowing transcription elongation. Promoter-proximal pausing by RNA polymerase II is a transcription halt following transcription initiation but prior to elongation, which acts as a checkpoint to control that transcripts are favorably configured for transcriptional elongation. The PNUTS-PP1 complex mediates the release of RNA polymerase II from promoter-proximal region of genes by catalyzing dephosphorylation of proteins involved in transcription, such as AFF4, CDK9, MEPCE, INTS12, NCBP1, POLR2M/GDOWN1 and SUPT6H. The PNUTS-PP1 complex also regulates RNA polymerase II transcription termination by mediating dephosphorylation of SUPT5H in termination zones downstream of poly(A) sites, thereby promoting deceleration of RNA polymerase II transcription. PNUTS-PP1 complex is also involved in the response to replication stress by mediating dephosphorylation of POLR2A at 'Ser-5' of the CTD, promoting RNA polymerase II degradation. The PNUTS-PP1 complex also plays a role in the control of chromatin structure and cell cycle progression during the transition from mitosis into interphase. PNUTS-PP1 complex mediates dephosphorylation of MYC, promoting MYC stability by preventing MYC ubiquitination by the SCF(FBXW7) complex. In addition to acts as a substrate-recognition component, PPP1R10/PNUTS also acts as a nuclear targeting subunit for the PNUTS-PP1 complex. In some context, PPP1R10/PNUTS also acts as an inhibitor of protein phosphatase 1 (PP1) activity by preventing access to substrates, such as RB. The sequence is that of Serine/threonine-protein phosphatase 1 regulatory subunit 10 (PPP1R10) from Sus scrofa (Pig).